The chain runs to 247 residues: Ribonuclease PH (247 aa).

Phosphate is bound by residues Arg-96 and 134-136; that span reads GTR.

It belongs to the RNase PH family. As to quaternary structure, homohexameric ring arranged as a trimer of dimers.

It carries out the reaction tRNA(n+1) + phosphate = tRNA(n) + a ribonucleoside 5'-diphosphate. Functionally, phosphorolytic 3'-5' exoribonuclease that plays an important role in tRNA 3'-end maturation. Removes nucleotide residues following the 3'-CCA terminus of tRNAs; can also add nucleotides to the ends of RNA molecules by using nucleoside diphosphates as substrates, but this may not be physiologically important. Probably plays a role in initiation of 16S rRNA degradation (leading to ribosome degradation) during starvation. This is Ribonuclease PH from Tropheryma whipplei (strain TW08/27) (Whipple's bacillus).